A 189-amino-acid chain; its full sequence is dCTP deaminase (189 aa).

DCTP is bound by residues 112-117, 136-138, Gln157, Tyr171, and Gln181; these read KSTYAR and TLE. Glu138 serves as the catalytic Proton donor/acceptor.

This sequence belongs to the dCTP deaminase family. As to quaternary structure, homotrimer.

It carries out the reaction dCTP + H2O + H(+) = dUTP + NH4(+). Its pathway is pyrimidine metabolism; dUMP biosynthesis; dUMP from dCTP (dUTP route): step 1/2. Its function is as follows. Catalyzes the deamination of dCTP to dUTP. The protein is dCTP deaminase of Nitrosospira multiformis (strain ATCC 25196 / NCIMB 11849 / C 71).